A 358-amino-acid chain; its full sequence is 3-isopropylmalate dehydrogenase (358 aa).

Position 77 to 90 (77 to 90) interacts with NAD(+); that stretch reads GEKWDSLPRELRPE. Residues Arg-97, Arg-107, Arg-135, and Asp-220 each coordinate substrate. Asp-220, Asp-244, and Asp-248 together coordinate Mg(2+). 277 to 289 serves as a coordination point for NAD(+); the sequence is GSAPDIAGQGIAN.

This sequence belongs to the isocitrate and isopropylmalate dehydrogenases family. LeuB type 1 subfamily. Homodimer. It depends on Mg(2+) as a cofactor. Mn(2+) serves as cofactor.

The protein resides in the cytoplasm. The catalysed reaction is (2R,3S)-3-isopropylmalate + NAD(+) = 4-methyl-2-oxopentanoate + CO2 + NADH. It participates in amino-acid biosynthesis; L-leucine biosynthesis; L-leucine from 3-methyl-2-oxobutanoate: step 3/4. Its function is as follows. Catalyzes the oxidation of 3-carboxy-2-hydroxy-4-methylpentanoate (3-isopropylmalate) to 3-carboxy-4-methyl-2-oxopentanoate. The product decarboxylates to 4-methyl-2 oxopentanoate. This chain is 3-isopropylmalate dehydrogenase, found in Wolinella succinogenes (strain ATCC 29543 / DSM 1740 / CCUG 13145 / JCM 31913 / LMG 7466 / NCTC 11488 / FDC 602W) (Vibrio succinogenes).